The sequence spans 251 residues: Imidazole glycerol phosphate synthase subunit HisF (251 aa).

Catalysis depends on residues Asp-11 and Asp-130.

The protein belongs to the HisA/HisF family. In terms of assembly, heterodimer of HisH and HisF.

Its subcellular location is the cytoplasm. It catalyses the reaction 5-[(5-phospho-1-deoxy-D-ribulos-1-ylimino)methylamino]-1-(5-phospho-beta-D-ribosyl)imidazole-4-carboxamide + L-glutamine = D-erythro-1-(imidazol-4-yl)glycerol 3-phosphate + 5-amino-1-(5-phospho-beta-D-ribosyl)imidazole-4-carboxamide + L-glutamate + H(+). It participates in amino-acid biosynthesis; L-histidine biosynthesis; L-histidine from 5-phospho-alpha-D-ribose 1-diphosphate: step 5/9. Functionally, IGPS catalyzes the conversion of PRFAR and glutamine to IGP, AICAR and glutamate. The HisF subunit catalyzes the cyclization activity that produces IGP and AICAR from PRFAR using the ammonia provided by the HisH subunit. In Thiobacillus denitrificans (strain ATCC 25259 / T1), this protein is Imidazole glycerol phosphate synthase subunit HisF.